Reading from the N-terminus, the 578-residue chain is Type I restriction enzyme MjaVIII methylase subunit (578 aa).

S-adenosyl-L-methionine-binding positions include glutamate 250–isoleucine 255, serine 280–serine 282, glutamate 303, and aspartate 332–serine 333.

Belongs to the N(4)/N(6)-methyltransferase family. In terms of assembly, the type I restriction/modification system is composed of three polypeptides R, M and S.

The enzyme catalyses a 2'-deoxyadenosine in DNA + S-adenosyl-L-methionine = an N(6)-methyl-2'-deoxyadenosine in DNA + S-adenosyl-L-homocysteine + H(+). In terms of biological role, the subtype gamma methyltransferase (M) subunit of a type I restriction enzyme. The M and S subunits together form a methyltransferase (MTase) that methylates A-2 on the top and A-3 on the bottom strand of the sequence 5'-GAYN(5)GTAA-3'. In the presence of the R subunit the complex can also act as an endonuclease, binding to the same target sequence but cutting the DNA some distance from this site. Whether the DNA is cut or modified depends on the methylation state of the target sequence. When the target site is unmodified, the DNA is cut. When the target site is hemimethylated, the complex acts as a maintenance MTase modifying the DNA so that both strands become methylated. After locating a non-methylated recognition site, the enzyme complex serves as a molecular motor that translocates DNA in an ATP-dependent manner until a collision occurs that triggers cleavage. The sequence is that of Type I restriction enzyme MjaVIII methylase subunit from Methanocaldococcus jannaschii (strain ATCC 43067 / DSM 2661 / JAL-1 / JCM 10045 / NBRC 100440) (Methanococcus jannaschii).